The primary structure comprises 491 residues: Trypanothione reductase (491 aa).

An FAD-binding site is contributed by 35-51 (DLQKHHGPPHYAALGGT). Cys52 and Cys57 are disulfide-bonded. His461 (proton acceptor) is an active-site residue.

It belongs to the class-I pyridine nucleotide-disulfide oxidoreductase family. In terms of assembly, homodimer. FAD is required as a cofactor. Post-translationally, the N-terminus is blocked.

The protein localises to the cytoplasm. It carries out the reaction trypanothione + NADP(+) = trypanothione disulfide + NADPH + H(+). Trypanothione is the parasite analog of glutathione; this enzyme is the equivalent of glutathione reductase. This Crithidia fasciculata protein is Trypanothione reductase (TPR).